Consider the following 229-residue polypeptide: uncharacterized protein (229 aa).

This is an uncharacterized protein from Bacillus subtilis (strain 168).